Reading from the N-terminus, the 428-residue chain is tRNA(Ile)-lysidine synthase (428 aa).

25 to 30 is a binding site for ATP; that stretch reads SGGIDS.

Belongs to the tRNA(Ile)-lysidine synthase family.

It is found in the cytoplasm. The catalysed reaction is cytidine(34) in tRNA(Ile2) + L-lysine + ATP = lysidine(34) in tRNA(Ile2) + AMP + diphosphate + H(+). In terms of biological role, ligates lysine onto the cytidine present at position 34 of the AUA codon-specific tRNA(Ile) that contains the anticodon CAU, in an ATP-dependent manner. Cytidine is converted to lysidine, thus changing the amino acid specificity of the tRNA from methionine to isoleucine. The protein is tRNA(Ile)-lysidine synthase of Haemophilus ducreyi (strain 35000HP / ATCC 700724).